Reading from the N-terminus, the 477-residue chain is Probable periplasmic serine endoprotease DegP-like (477 aa).

The N-terminal stretch at 1–27 is a signal peptide; sequence MSIPRLKSYLMMFAAVLMLGQVLTAQA. Residues histidine 117, aspartate 147, and serine 220 each act as charge relay system in the active site. Substrate-binding positions include 218 to 220 and 275 to 279; these read GNS and LGVVI. PDZ domains follow at residues 264–355 and 361–466; these read LKKD…IRNG and DISV…LRQG.

The protein belongs to the peptidase S1C family.

Its subcellular location is the periplasm. The catalysed reaction is Acts on substrates that are at least partially unfolded. The cleavage site P1 residue is normally between a pair of hydrophobic residues, such as Val-|-Val.. Its function is as follows. Might be efficient in the degradation of transiently denatured and unfolded proteins which accumulate in the periplasm following stress conditions. This chain is Probable periplasmic serine endoprotease DegP-like, found in Pseudomonas putida (strain ATCC 700007 / DSM 6899 / JCM 31910 / BCRC 17059 / LMG 24140 / F1).